A 275-amino-acid polypeptide reads, in one-letter code: Lectin (275 aa).

The first 30 residues, 1–30, serve as a signal peptide directing secretion; the sequence is MASLQTQMISFYLIFLSILLTTIFFFKVNS. Residues D111 and G129 each coordinate D-glucose. Mn(2+) is bound by residues E149 and D151. Ca(2+) is bound by residues D151, F153, N155, and D159. The Mn(2+) site is built by D159 and H166. Residues 211-217 constitute a propeptide that is removed on maturation; sequence NSLEEEN. G246 and A247 together coordinate D-glucose. Positions 270–275 are excised as a propeptide; it reads KQAADA.

This sequence belongs to the leguminous lectin family. Heterotetramer of two alpha and two beta chains. In terms of processing, the mature form consists of two chains, alpha and beta, produced by cleavage of the immature protein. These remain cleaved, yet fold together to form one subunit.

D-mannose specific lectin. This chain is Lectin, found in Lens culinaris subsp. tomentosus (Lentil).